Reading from the N-terminus, the 350-residue chain is uncharacterized protein (350 aa).

This is an uncharacterized protein from Methanocaldococcus jannaschii (strain ATCC 43067 / DSM 2661 / JAL-1 / JCM 10045 / NBRC 100440) (Methanococcus jannaschii).